A 617-amino-acid chain; its full sequence is Neurosecretory protein VGF (617 aa).

The first 23 residues, 1–23 (MKTFTLPASVLFCFLLLIQGLGA), serve as a signal peptide directing secretion. 3 disordered regions span residues 29–75 (PDVF…GELF), 93–204 (RPAS…ESPG), and 239–262 (SESAPLPETHQFGEGVSSPKTHLG). Residues 48 to 64 (AVSRPKDDGVPEVRAAR) are compositionally biased toward basic and acidic residues. Over residues 149–160 (DPEEDDRSEELE) the composition is skewed to acidic residues. The span at 182–197 (ETAAAETETRTHTLTR) shows a compositional bias: low complexity. Residue Gln313 is modified to Pyrrolidone carboxylic acid. Residues 345 to 364 (RQRDLGGRELQETQQERENE) show a composition bias toward basic and acidic residues. The tract at residues 345–599 (RQRDLGGREL…EEADAEERRL (255 aa)) is disordered. Residues 378–397 (EDDVGEEDEEAAEAEAEAEE) are compositionally biased toward acidic residues. Basic and acidic residues predominate over residues 418–436 (AEDKRSQEEAPGHRRKDAE). Ser423 carries the phosphoserine modification. Positions 437–452 (GAEEGGEEDDDDEEMD) are enriched in acidic residues. The segment covering 491–501 (PPEPVPPPRAA) has biased composition (pro residues). The segment covering 577–599 (HHPDLEAQARRAQEEADAEERRL) has biased composition (basic and acidic residues).

Interacts with HSPA8 on cell membrane. Interacts with C3AR1. Interacts with C1QBP.

Its subcellular location is the secreted. The protein localises to the cytoplasmic vesicle. It localises to the secretory vesicle. In terms of biological role, secreted polyprotein that is packaged and proteolytically processed by prohormone convertases PCSK1 and PCSK2 in a cell-type-specific manner. VGF and peptides derived from its processing play many roles in neurogenesis and neuroplasticity associated with learning, memory, depression and chronic pain. Its function is as follows. Plays a role in the control of body fluid homeostasis by regulating vasopressin release. Suppresses presynaptic glutamatergic neurons connected to vasopressin neurons. Plays a role in the control of body fluid homeostasis by regulating vasopressin release. Activates GABAergic interneurons which are inhibitory neurons of the nervous system and thereby suppresses presynaptic glutamatergic neurons. Also stimulates feeding behavior in an orexin-dependent manner in the hypothalamus. Functions as a positive regulator for the activation of orexin neurons resulting in elevated gastric acid secretion and gastric emptying. Functionally, secreted multifunctional peptide that interacts with different receptors and thereby plays multiple physiological roles including modulation of energy expenditure, pain, response to stress, gastric regulation as well as lipolysis. Activates the G-protein-coupled receptor C3AR1 via a folding-upon-binding mechanism leading to enhanced lipolysis in adipocytes. Interacts with gC1qR receptor in macrophages and microglia causing increased levels of intracellular calcium and hypersensitivity. In terms of biological role, plays a role in the regulation of memory formation and depression-related behaviors potentially by influencing synaptic plasticity and neurogenesis. Induces acute and transient activation of the NTRK2/TRKB receptor and subsequent CREB phosphorylation. Also induces insulin secretion in insulinoma cells by increasing intracellular calcium mobilization. In Mus musculus (Mouse), this protein is Neurosecretory protein VGF.